The primary structure comprises 402 residues: Multidrug resistance protein MdtH (402 aa).

The Cytoplasmic segment spans residues 1–12 (MSRVSQARNLGK). The helical transmembrane segment at 13–33 (YFLLIDNMLVVLGFFVVFPLI) threads the bilayer. Over 34–98 (SIRFVDQMGW…GFATMGIAHE (65 aa)) the chain is Periplasmic. Residues 99–116 (PWLLWFSCLLSGLGGTLF) form a helical membrane-spanning segment. Residues 117–138 (DPPRSALVVKLIRPQQRGRFFS) are Cytoplasmic-facing. A helical membrane pass occupies residues 139–159 (LLMMQDSAGAVIGALLGSWLL). At 160-164 (QYDFR) the chain is on the periplasmic side. A helical transmembrane segment spans residues 165-185 (LVCATGAVLFVLCAAFNAWLL). Over 186–213 (PAWKLSTVRTPVREGMTRVMRDKRFVTY) the chain is Cytoplasmic. The chain crosses the membrane as a helical span at residues 214–234 (VLTLAGYYMLAVQVMLMLPIM). Over 235 to 243 (VNDVAGAPS) the chain is Periplasmic. Residues 244 to 264 (AVKWMYAIEACLSLTLLYPIA) form a helical membrane-spanning segment. Over 265–276 (RWSEKHFRLEHR) the chain is Cytoplasmic. A helical transmembrane segment spans residues 277 to 297 (LMAGLLIMSLSMMPVGMVSGL). The Periplasmic segment spans residues 298-299 (QQ). Residues 300-320 (LFNLICLFYIGSIIAEPARET) form a helical membrane-spanning segment. Residues 321 to 339 (LSASLADARARGSYMGFSR) are Cytoplasmic-facing. The chain crosses the membrane as a helical span at residues 340–360 (LGLAIGGAIGYIGGGWLFDLG). At 361 to 367 (KSAHQPE) the chain is on the periplasmic side. The chain crosses the membrane as a helical span at residues 368 to 388 (LPWMMLGIIGIFTFLALGWQF). The Cytoplasmic segment spans residues 389–402 (SQKRAARRLLERDA).

Belongs to the major facilitator superfamily. DHA1 family. MdtH (TC 2.A.1.2.21) subfamily.

It localises to the cell inner membrane. In terms of biological role, confers resistance to norfloxacin and enoxacin. The polypeptide is Multidrug resistance protein MdtH (Escherichia coli O9:H4 (strain HS)).